Reading from the N-terminus, the 126-residue chain is Fluoride-specific ion channel FluC (126 aa).

4 helical membrane passes run 3-23 (FAIL…RFLV), 37-57 (IGTL…IACV), 70-90 (VIGL…MDNV), and 104-124 (NVLL…HWLM). 2 residues coordinate Na(+): Gly-77 and Thr-80.

It belongs to the fluoride channel Fluc/FEX (TC 1.A.43) family.

The protein localises to the cell inner membrane. The catalysed reaction is fluoride(in) = fluoride(out). Na(+) is not transported, but it plays an essential structural role and its presence is essential for fluoride channel function. Functionally, fluoride-specific ion channel. Important for reducing fluoride concentration in the cell, thus reducing its toxicity. The chain is Fluoride-specific ion channel FluC from Vibrio cholerae serotype O1 (strain ATCC 39541 / Classical Ogawa 395 / O395).